Consider the following 134-residue polypeptide: (R)-specific enoyl-CoA hydratase (134 aa).

A MaoC-like domain is found at 5–119; the sequence is SLEVGQKARL…ATLTTRIFTQ (115 aa). A (3R)-3-hydroxyacyl-CoA-binding positions include 32 to 37, glycine 55, and phenylalanine 84; that span reads DFNPLH.

In terms of assembly, homodimer.

The enzyme catalyses a (3R)-3-hydroxyacyl-CoA = a (2E)-enoyl-CoA + H2O. Its function is as follows. Catalyzes the hydration of trans-2-enoyl-CoA with a chain-length of 4-6 carbon atoms, forming the corresponding (3R)-3-hydroxyacyl-CoA. This Aeromonas caviae (Aeromonas punctata) protein is (R)-specific enoyl-CoA hydratase (phaJ).